The primary structure comprises 582 residues: Aspartate--tRNA ligase (582 aa).

Residues glutamine 198–lysine 201 are aspartate. Residue arginine 220 coordinates L-aspartate. ATP-binding positions include arginine 220–glutamate 222 and glutamine 229. Histidine 445 serves as a coordination point for L-aspartate. Glutamate 479 contributes to the ATP binding site. Position 486 (arginine 486) interacts with L-aspartate. An ATP-binding site is contributed by glycine 531 to arginine 534.

This sequence belongs to the class-II aminoacyl-tRNA synthetase family. Type 1 subfamily. Homodimer.

It is found in the cytoplasm. It carries out the reaction tRNA(Asp) + L-aspartate + ATP = L-aspartyl-tRNA(Asp) + AMP + diphosphate. In terms of biological role, catalyzes the attachment of L-aspartate to tRNA(Asp) in a two-step reaction: L-aspartate is first activated by ATP to form Asp-AMP and then transferred to the acceptor end of tRNA(Asp). This Amoebophilus asiaticus (strain 5a2) protein is Aspartate--tRNA ligase.